Reading from the N-terminus, the 205-residue chain is Protein Nef (205 aa).

Gly-2 is lipidated: N-myristoyl glycine; by host. Residue Ser-6 is modified to Phosphoserine; by host. Positions 62-65 (EEEE) are acidic; interacts with host PACS1 and PACS2; stabilizes the interaction of NEF/MHC-I with host AP1M1; necessary for MHC-I internalization. The segment at 69-78 (PVRPQVPVRP) is SH3-binding; interaction with Src family tyrosine kinases. The PxxP; stabilizes the interaction of NEF/MHC-I with host AP1M1; necessary for MHC-I internalization motif lies at 72–75 (PQVP). A mediates dimerization, Nef-PTE1 interaction region spans residues 108 to 124 (DTLDLWVYHTQGYFPDW). Residues 148–180 (VDPEEVEKANEGENNCLLHPMSQHGMEDEDREV) are binding to ATP6V1H. The Dileucine internalization motif; necessary for CD4 internalization motif lies at 164–165 (LL). Positions 174–175 (ED) match the Diacidic; necessary for CD4 internalization motif.

It belongs to the lentivirus primate group Nef protein family. In terms of assembly, monomer; cytosolic form. Homodimer; membrane bound form. Interacts with Nef associated p21-activated kinase (PAK2); this interaction activates PAK2. Associates with the Nef-MHC-I-AP1 complex; this complex is required for MHC-I internalization. Interacts (via C-terminus) with host PI3-kinase. Interacts with host PACS1; this interaction seems to be weak. Interacts with host PACS2. Interacts with host LCK and MAPK3; these interactions inhibit the kinase activity of the latter. Interacts with host ATP6V1H; this interaction may play a role in CD4 endocytosis. Associates with the CD4-Nef-AP2 complex; this complex is required for CD4 internalization. Interacts with host AP2 subunit alpha and AP2 subunit sigma2. Interacts with TCR-zeta chain; this interaction up-regulates the Fas ligand (FasL) surface expression. Interacts with host HCK, LYN, and SRC; these interactions activate the Src family kinases. Interacts with MAP3K5; this interaction inhibits the Fas and TNFR-mediated death signals. Interacts with beta-COP and PTE1. Interacts with human RACK1; this increases Nef phosphorylation by PKC. Interacts with TP53; this interaction decreases the half-life of TP53, protecting the infected cell against p53-mediated apoptosis. Post-translationally, the virion-associated Nef proteins are cleaved by the viral protease to release the soluble C-terminal core protein. Nef is probably cleaved concomitantly with viral structural proteins on maturation of virus particles. Myristoylated. In terms of processing, phosphorylated on serine residues, probably by host PKCdelta and theta.

The protein resides in the host cell membrane. It localises to the virion. Its subcellular location is the secreted. The protein localises to the host Golgi apparatus membrane. Factor of infectivity and pathogenicity, required for optimal virus replication. Alters numerous pathways of T-lymphocyte function and down-regulates immunity surface molecules in order to evade host defense and increase viral infectivity. Alters the functionality of other immunity cells, like dendritic cells, monocytes/macrophages and NK cells. In terms of biological role, in infected CD4(+) T-lymphocytes, down-regulates the surface MHC-I, mature MHC-II, CD4, CD28, CCR5 and CXCR4 molecules. Mediates internalization and degradation of host CD4 through the interaction of with the cytoplasmic tail of CD4, the recruitment of AP-2 (clathrin adapter protein complex 2), internalization through clathrin coated pits, and subsequent transport to endosomes and lysosomes for degradation. Diverts host MHC-I molecules to the trans-Golgi network-associated endosomal compartments by an endocytic pathway to finally target them for degradation. MHC-I down-regulation may involve AP-1 (clathrin adapter protein complex 1) or possibly Src family kinase-ZAP70/Syk-PI3K cascade recruited by PACS2. In consequence infected cells are masked for immune recognition by cytotoxic T-lymphocytes. Decreasing the number of immune receptors also prevents reinfection by more HIV particles (superinfection). Down-regulates host SERINC3 and SERINC5 thereby excluding these proteins from the viral particles. Virion infectivity is drastically higher when SERINC3 or SERINC5 are excluded from the viral envelope, because these host antiviral proteins impair the membrane fusion event necessary for subsequent virion penetration. Functionally, bypasses host T-cell signaling by inducing a transcriptional program nearly identical to that of anti-CD3 cell activation. Interaction with TCR-zeta chain up-regulates the Fas ligand (FasL). Increasing surface FasL molecules and decreasing surface MHC-I molecules on infected CD4(+) cells send attacking cytotoxic CD8+ T-lymphocytes into apoptosis. Its function is as follows. Plays a role in optimizing the host cell environment for viral replication without causing cell death by apoptosis. Protects the infected cells from apoptosis in order to keep them alive until the next virus generation is ready to strike. Inhibits the Fas and TNFR-mediated death signals by blocking MAP3K5/ASK1. Decreases the half-life of TP53, protecting the infected cell against p53-mediated apoptosis. Inhibits the apoptotic signals regulated by the Bcl-2 family proteins through the formation of a Nef/PI3-kinase/PAK2 complex that leads to activation of PAK2 and induces phosphorylation of host BAD. Extracellular Nef protein targets CD4(+) T-lymphocytes for apoptosis by interacting with CXCR4 surface receptors. This chain is Protein Nef, found in Human immunodeficiency virus type 1 group M subtype F1 (isolate VI850) (HIV-1).